Consider the following 187-residue polypeptide: Putative glutathione-dependent formaldehyde-activating enzyme (187 aa).

The 147-residue stretch at 20–166 (FPGGKLYCHC…FESVGLKTYD (147 aa)) folds into the CENP-V/GFA domain. Zn(2+)-binding residues include Cys27, Cys29, Cys48, Cys50, Cys53, Cys95, and Cys98.

This sequence belongs to the Gfa family. It depends on Zn(2+) as a cofactor.

It catalyses the reaction S-(hydroxymethyl)glutathione = glutathione + formaldehyde. It participates in one-carbon metabolism; formaldehyde degradation; formate from formaldehyde (glutathione route): step 1/3. In terms of biological role, catalyzes the condensation of formaldehyde and glutathione to S-hydroxymethylglutathione. This chain is Putative glutathione-dependent formaldehyde-activating enzyme, found in Talaromyces marneffei (strain ATCC 18224 / CBS 334.59 / QM 7333) (Penicillium marneffei).